The sequence spans 401 residues: Nuclear hormone receptor family member nhr-65 (401 aa).

The nuclear receptor DNA-binding region spans 10 to 79 (PERCKVCGDT…AGMSSENFQF (70 aa)). 2 NR C4-type zinc fingers span residues 13-33 (CKVC…CRAC) and 49-67 (CENH…LQRC). In terms of domain architecture, NR LBD spans 132–398 (KAEKLIEFGS…FSHPEFIQDA (267 aa)).

This sequence belongs to the nuclear hormone receptor family.

It localises to the nucleus. Its function is as follows. Orphan nuclear receptor. The polypeptide is Nuclear hormone receptor family member nhr-65 (nhr-65) (Caenorhabditis elegans).